The primary structure comprises 383 residues: Putative 8-amino-7-oxononanoate synthase (383 aa).

A substrate-binding site is contributed by Arg22. Pyridoxal 5'-phosphate is bound at residue 109–110 (GY). Substrate is bound at residue His134. Residues Ser182, 207–210 (DDAH), and 236–239 (TLSK) each bind pyridoxal 5'-phosphate. N6-(pyridoxal phosphate)lysine is present on Lys239. Thr348 lines the substrate pocket.

The protein belongs to the class-II pyridoxal-phosphate-dependent aminotransferase family. BioF subfamily. As to quaternary structure, homodimer. Pyridoxal 5'-phosphate serves as cofactor.

It carries out the reaction 6-carboxyhexanoyl-[ACP] + L-alanine + H(+) = (8S)-8-amino-7-oxononanoate + holo-[ACP] + CO2. The protein operates within cofactor biosynthesis; biotin biosynthesis. In terms of biological role, catalyzes the decarboxylative condensation of pimeloyl-[acyl-carrier protein] and L-alanine to produce 8-amino-7-oxononanoate (AON), [acyl-carrier protein], and carbon dioxide. The polypeptide is Putative 8-amino-7-oxononanoate synthase (bioF) (Caulobacter sp. (strain K31)).